The primary structure comprises 337 residues: tRNA N6-adenosine threonylcarbamoyltransferase (337 aa).

The Fe cation site is built by H111 and H115. Substrate is bound by residues 134–138 (LVSGG), D167, G180, and N272. Residue D300 participates in Fe cation binding.

It belongs to the KAE1 / TsaD family. The cofactor is Fe(2+).

Its subcellular location is the cytoplasm. The enzyme catalyses L-threonylcarbamoyladenylate + adenosine(37) in tRNA = N(6)-L-threonylcarbamoyladenosine(37) in tRNA + AMP + H(+). Required for the formation of a threonylcarbamoyl group on adenosine at position 37 (t(6)A37) in tRNAs that read codons beginning with adenine. Is involved in the transfer of the threonylcarbamoyl moiety of threonylcarbamoyl-AMP (TC-AMP) to the N6 group of A37, together with TsaE and TsaB. TsaD likely plays a direct catalytic role in this reaction. The sequence is that of tRNA N6-adenosine threonylcarbamoyltransferase from Klebsiella pneumoniae (strain 342).